The chain runs to 94 residues: Large ribosomal subunit protein bL27 (94 aa).

The propeptide occupies Met-1–Phe-9.

Belongs to the bacterial ribosomal protein bL27 family. The N-terminus is cleaved by ribosomal processing cysteine protease Prp.

The chain is Large ribosomal subunit protein bL27 from Bacillus velezensis (strain DSM 23117 / BGSC 10A6 / LMG 26770 / FZB42) (Bacillus amyloliquefaciens subsp. plantarum).